The following is a 138-amino-acid chain: Transcription antitermination protein NusB (138 aa).

It belongs to the NusB family.

Functionally, involved in transcription antitermination. Required for transcription of ribosomal RNA (rRNA) genes. Binds specifically to the boxA antiterminator sequence of the ribosomal RNA (rrn) operons. In Alkaliphilus oremlandii (strain OhILAs) (Clostridium oremlandii (strain OhILAs)), this protein is Transcription antitermination protein NusB.